Reading from the N-terminus, the 140-residue chain is Large-conductance mechanosensitive channel (140 aa).

Transmembrane regions (helical) follow at residues 14-34 and 85-105; these read VMDL…TGSL and GAFV…FLLV.

The protein belongs to the MscL family. In terms of assembly, homopentamer.

The protein resides in the cell inner membrane. Functionally, channel that opens in response to stretch forces in the membrane lipid bilayer. May participate in the regulation of osmotic pressure changes within the cell. This is Large-conductance mechanosensitive channel from Sphingopyxis alaskensis (strain DSM 13593 / LMG 18877 / RB2256) (Sphingomonas alaskensis).